A 1097-amino-acid polypeptide reads, in one-letter code: Error-prone DNA polymerase (1097 aa).

Residues 1039–1097 (PTGRGDEFAHGSPGGGDSRDRSPPKPRDIVVPLCRARHKGIDPEPETMPSAFPKPRDFR) form a disordered region. The segment covering 1055–1066 (DSRDRSPPKPRD) has biased composition (basic and acidic residues).

The protein belongs to the DNA polymerase type-C family. DnaE2 subfamily.

It localises to the cytoplasm. The enzyme catalyses DNA(n) + a 2'-deoxyribonucleoside 5'-triphosphate = DNA(n+1) + diphosphate. Its function is as follows. DNA polymerase involved in damage-induced mutagenesis and translesion synthesis (TLS). It is not the major replicative DNA polymerase. The protein is Error-prone DNA polymerase of Allorhizobium ampelinum (strain ATCC BAA-846 / DSM 112012 / S4) (Agrobacterium vitis (strain S4)).